A 138-amino-acid polypeptide reads, in one-letter code: Acidic phospholipase A2 BITP01A (138 aa).

The signal sequence occupies residues 1-16 (MRTLWIMAVLLVGVEG). 7 disulfides stabilise this stretch: C42–C131, C44–C60, C59–C111, C65–C138, C66–C104, C73–C97, and C91–C102. The Ca(2+) site is built by Y43, G45, and G47. Residue H63 is part of the active site. D64 is a binding site for Ca(2+). D105 is a catalytic residue.

It depends on Ca(2+) as a cofactor. Expressed by the venom gland.

Its subcellular location is the secreted. It carries out the reaction a 1,2-diacyl-sn-glycero-3-phosphocholine + H2O = a 1-acyl-sn-glycero-3-phosphocholine + a fatty acid + H(+). Snake venom phospholipase A2 (PLA2) that induces edema in mice, produces neuromuscular blockade in chick biventer cervicis, increases CK release and produces myonecrosis. PLA2 catalyzes the calcium-dependent hydrolysis of the 2-acyl groups in 3-sn-phosphoglycerides. This chain is Acidic phospholipase A2 BITP01A, found in Bothrops insularis (Golden lancehead).